A 366-amino-acid chain; its full sequence is Septin-1 (366 aa).

The Septin-type G domain occupies 22–295 (KGFDFTLMVA…EGYRARCLQS (274 aa)). The tract at residues 32–39 (GESGLGKS) is G1 motif. GTP-binding positions include 32–39 (GESGLGKS), Thr66, Gly92, and 171–179 (KADALLPRE). Residues 89–92 (DTPG) are G3 motif. A G4 motif region spans residues 170–173 (GKAD). Ser206 carries the phosphoserine modification. Gly229 and Arg244 together coordinate GTP. Ser247 carries the phosphoserine; by AURKB modification. Phosphothreonine is present on Thr250. Phosphoserine; by AURKB occurs at positions 306 and 314. The segment at 347 to 366 (EKMQAQMQQSQAQGEQSDVL) is disordered. Residues 349–366 (MQAQMQQSQAQGEQSDVL) show a composition bias toward low complexity.

This sequence belongs to the TRAFAC class TrmE-Era-EngA-EngB-Septin-like GTPase superfamily. Septin GTPase family. Septins polymerize into heterooligomeric protein complexes that form filaments, and can associate with cellular membranes, actin filaments and microtubules. GTPase activity is required for filament formation. Interacts with AURKB.

The protein localises to the cytoplasm. It is found in the cytoskeleton. Its subcellular location is the microtubule organizing center. The protein resides in the centrosome. It localises to the midbody. Functionally, filament-forming cytoskeletal GTPase. May play a role in cytokinesis (Potential). This Rattus norvegicus (Rat) protein is Septin-1.